The following is a 407-amino-acid chain: Argininosuccinate synthase (407 aa).

ATP contacts are provided by residues 16 to 24 (AYSGGLDTS) and alanine 44. Tyrosine 96 and serine 101 together coordinate L-citrulline. ATP is bound at residue glycine 126. Residues threonine 128, asparagine 132, and aspartate 133 each contribute to the L-aspartate site. Residue asparagine 132 coordinates L-citrulline. Residues arginine 136, serine 185, serine 194, glutamate 270, and tyrosine 282 each coordinate L-citrulline.

It belongs to the argininosuccinate synthase family. Type 1 subfamily. In terms of assembly, homotetramer.

The protein resides in the cytoplasm. The enzyme catalyses L-citrulline + L-aspartate + ATP = 2-(N(omega)-L-arginino)succinate + AMP + diphosphate + H(+). It participates in amino-acid biosynthesis; L-arginine biosynthesis; L-arginine from L-ornithine and carbamoyl phosphate: step 2/3. In Shewanella putrefaciens (strain CN-32 / ATCC BAA-453), this protein is Argininosuccinate synthase.